The chain runs to 397 residues: GDP-mannose transporter 1 (397 aa).

The disordered stretch occupies residues 1–57 (MSKPFVPTPNISRPATPSSLDYGKDEASSTLLRDMGERGDRERKDREERDKKEAMPS). The Cytoplasmic portion of the chain corresponds to 1–61 (MSKPFVPTPN…KEAMPSGQDQ (61 aa)). Polar residues predominate over residues 9-19 (PNISRPATPSS). The span at 34–54 (DMGERGDRERKDREERDKKEA) shows a compositional bias: basic and acidic residues. A helical membrane pass occupies residues 62 to 82 (VLPILSYCAASIMMTVVNKYV). Over 83 to 87 (VSGAN) the chain is Lumenal. Residue asparagine 87 is glycosylated (N-linked (GlcNAc...) asparagine). Residues 88 to 108 (FTMTFLLLAIQSSVCVLAVTT) form a helical membrane-spanning segment. At 109–124 (VKKLGFISFRDFDKND) the chain is on the cytoplasmic side. The chain crosses the membrane as a helical span at residues 125-142 (AKAWWPISTLLVAVIYTG). Residues 143–145 (SKA) lie on the Lumenal side of the membrane. Residues 146–168 (LQFLSIPVYTIFKNLTIILIAYG) form a helical membrane-spanning segment. Over 169–174 (EVFMFN) the chain is Cytoplasmic. A helical membrane pass occupies residues 175 to 197 (GAVSGLTLCSFALMVGSSIIAAW). Residues 198–228 (SDITSVWNKEPELDPITGLEITVGPVSTIGG) lie on the Lumenal side of the membrane. A helical membrane pass occupies residues 229–249 (LNAGYIWMALNCFVSAAYVLF). The Cytoplasmic segment spans residues 250–272 (MRKRIKVTGFKDWDSMYYNNLLS). The chain crosses the membrane as a helical span at residues 273–293 (IPILVVFSLVIEDWGSESLAL). Residues 294–300 (NFPASNR) are Lumenal-facing. A helical membrane pass occupies residues 301-321 (VLLLSAMAFSGAAAVFISYST). The Cytoplasmic segment spans residues 322-332 (AWCVRITGSTT). A helical transmembrane segment spans residues 333 to 353 (YSMVGALNKLPVAASGILFFG). The Lumenal portion of the chain corresponds to 354 to 355 (DP). A helical membrane pass occupies residues 356 to 376 (ANFGNISAIAVGGVAGVVYAV). Residues 377 to 397 (AKTNQAKVEKARQARAAGGRP) are Cytoplasmic-facing.

It belongs to the TPT transporter family. SLC35D subfamily. Homooligomer.

Its subcellular location is the golgi apparatus membrane. The protein resides in the cytoplasmic vesicle membrane. The protein localises to the endoplasmic reticulum membrane. In terms of biological role, involved in the import of GDP-mannose from the cytoplasm into the Golgi lumen. Involved in capsule synthesis. The protein is GDP-mannose transporter 1 (GMT1) of Cryptococcus neoformans var. neoformans serotype D (strain B-3501A) (Filobasidiella neoformans).